The primary structure comprises 141 residues: Hemoglobin subunit alpha (141 aa).

Positions 1–141 constitute a Globin domain; sequence VLSPDDKKHV…VSTVLTSKYR (141 aa). At Ser-3 the chain carries Phosphoserine. N6-succinyllysine is present on residues Lys-7 and Lys-11. Position 16 is an N6-acetyllysine; alternate (Lys-16). Lys-16 carries the N6-succinyllysine; alternate modification. Residue Tyr-24 is modified to Phosphotyrosine. Position 35 is a phosphoserine (Ser-35). An N6-succinyllysine modification is found at Lys-40. Ser-49 carries the post-translational modification Phosphoserine. His-58 lines the O2 pocket. His-87 contributes to the heme b binding site. Ser-102 is subject to Phosphoserine. Thr-108 carries the phosphothreonine modification. Ser-124 and Ser-131 each carry phosphoserine. A phosphothreonine mark is found at Thr-134 and Thr-137. Ser-138 bears the Phosphoserine mark.

Belongs to the globin family. In terms of assembly, heterotetramer of two alpha chains and two beta chains. In terms of tissue distribution, red blood cells.

In terms of biological role, involved in oxygen transport from the lung to the various peripheral tissues. Hemopressin acts as an antagonist peptide of the cannabinoid receptor CNR1. Hemopressin-binding efficiently blocks cannabinoid receptor CNR1 and subsequent signaling. The sequence is that of Hemoglobin subunit alpha (HBA) from Theropithecus gelada (Gelada baboon).